The chain runs to 304 residues: MNQYMEFYKLLGEFYNEEDITVDSPMSEHIYFRVGGPADILVTPVNEEQVVNTLKLCREYNVPYFILGNGSNILVKDGGISGVVIKFNKLNKITTEGNCVTAQSGALLKDVSKAALENNLRGFEFACGIPGSIGGAVFMNAGAYDGEMAHVIKSARVIDENCNIKNLTKEELELGYRSSIVMKKGYVVIEATIELESGEYASIKDKIDDLTNRRESKQPLEYPSAGSTFKRPEGYFAGKLIQDSGLKGFSIGGAAVSEKHSGFVINKGGATAKDVLDVIAHVQKTVKENFDVELHTEVRIIGRD.

The 166-residue stretch at 33 to 198 (RVGGPADILV…IEATIELESG (166 aa)) folds into the FAD-binding PCMH-type domain. Residue arginine 177 is part of the active site. Serine 227 (proton donor) is an active-site residue. The active site involves glutamate 297.

The protein belongs to the MurB family. FAD serves as cofactor.

Its subcellular location is the cytoplasm. It catalyses the reaction UDP-N-acetyl-alpha-D-muramate + NADP(+) = UDP-N-acetyl-3-O-(1-carboxyvinyl)-alpha-D-glucosamine + NADPH + H(+). The protein operates within cell wall biogenesis; peptidoglycan biosynthesis. In terms of biological role, cell wall formation. This is UDP-N-acetylenolpyruvoylglucosamine reductase from Clostridium perfringens (strain SM101 / Type A).